Reading from the N-terminus, the 236-residue chain is Ureidoacrylate amidohydrolase RutB (236 aa).

Residue Asp24 is the Proton acceptor of the active site. Residue Lys133 is part of the active site. Cys166 (nucleophile) is an active-site residue.

This sequence belongs to the isochorismatase family. RutB subfamily.

It carries out the reaction (Z)-3-ureidoacrylate + H2O + H(+) = (Z)-3-aminoacrylate + NH4(+) + CO2. The catalysed reaction is (Z)-3-ureidoacrylate + H2O = (Z)-3-aminoacrylate + carbamate + H(+). It catalyses the reaction (Z)-2-methylureidoacrylate + H2O + H(+) = (Z)-2-methylaminoacrylate + NH4(+) + CO2. In terms of biological role, hydrolyzes ureidoacrylate to form aminoacrylate and carbamate. The carbamate hydrolyzes spontaneously, thereby releasing one of the nitrogen atoms of the pyrimidine ring as ammonia and one of its carbon atoms as CO2. This is Ureidoacrylate amidohydrolase RutB from Klebsiella pneumoniae (strain 342).